The following is a 130-amino-acid chain: Anti-adapter protein IraD (130 aa).

Belongs to the GpW/Gp25 family. IraD subfamily. Interacts with RssB.

It localises to the cytoplasm. In terms of biological role, inhibits RpoS proteolysis by regulating RssB activity, thereby increasing the stability of the sigma stress factor RpoS during oxidative stress. Its effect on RpoS stability is due to its interaction with RssB, which probably blocks the interaction of RssB with RpoS, and the consequent delivery of the RssB-RpoS complex to the ClpXP protein degradation pathway. The polypeptide is Anti-adapter protein IraD (Escherichia coli O7:K1 (strain IAI39 / ExPEC)).